The following is a 387-amino-acid chain: Exodeoxyribonuclease 7 large subunit (387 aa).

This sequence belongs to the XseA family. As to quaternary structure, heterooligomer composed of large and small subunits.

Its subcellular location is the cytoplasm. It carries out the reaction Exonucleolytic cleavage in either 5'- to 3'- or 3'- to 5'-direction to yield nucleoside 5'-phosphates.. Functionally, bidirectionally degrades single-stranded DNA into large acid-insoluble oligonucleotides, which are then degraded further into small acid-soluble oligonucleotides. This is Exodeoxyribonuclease 7 large subunit from Campylobacter jejuni subsp. jejuni serotype O:2 (strain ATCC 700819 / NCTC 11168).